The primary structure comprises 421 residues: Stemmadenine O-acetyltransferase (421 aa).

The tract at residues 1-21 (MAPQMQILSEELIQPSSPTPQ) is disordered. Active-site proton acceptor residues include His-160 and Asp-362.

The protein belongs to the plant acyltransferase family. Monomer. As to expression, expressed in leaf epidermis.

It catalyses the reaction 15alpha-stemmadenine + acetyl-CoA = O-acetyl-15alpha-stemmadenine + CoA. The protein operates within alkaloid biosynthesis. Functionally, component of iboga and aspidosperma monoterpenoid indole alkaloids (MIAs, e.g. tabersonine and catharanthine) biosynthesis pathway from 19E-geissoschizine. Acetyltransferase that catalyzes the formation of O-acetylstemmadenine from stemmadenine. In Catharanthus roseus (Madagascar periwinkle), this protein is Stemmadenine O-acetyltransferase.